The chain runs to 275 residues: Phosphate import ATP-binding protein PstB 3 (275 aa).

A disordered region spans residues 1–26 (MATQETDDSLISTDVQTDATERGDQP). Positions 9–18 (SLISTDVQTD) are enriched in polar residues. The region spanning 31-270 (VETKHLDVHY…PEDDRVEDYI (240 aa)) is the ABC transporter domain. Residue 63-70 (GPSGCGKS) coordinates ATP.

This sequence belongs to the ABC transporter superfamily. Phosphate importer (TC 3.A.1.7) family. As to quaternary structure, the complex is composed of two ATP-binding proteins (PstB), two transmembrane proteins (PstC and PstA) and a solute-binding protein (PstS).

The protein localises to the cell membrane. It catalyses the reaction phosphate(out) + ATP + H2O = ADP + 2 phosphate(in) + H(+). Functionally, part of the ABC transporter complex PstSACB involved in phosphate import. Responsible for energy coupling to the transport system. This Natronomonas pharaonis (strain ATCC 35678 / DSM 2160 / CIP 103997 / JCM 8858 / NBRC 14720 / NCIMB 2260 / Gabara) (Halobacterium pharaonis) protein is Phosphate import ATP-binding protein PstB 3.